We begin with the raw amino-acid sequence, 472 residues long: 3-isopropylmalate dehydratase large subunit (472 aa).

Residues Cys-347, Cys-407, and Cys-410 each coordinate [4Fe-4S] cluster.

The protein belongs to the aconitase/IPM isomerase family. LeuC type 1 subfamily. Heterodimer of LeuC and LeuD. The cofactor is [4Fe-4S] cluster.

It catalyses the reaction (2R,3S)-3-isopropylmalate = (2S)-2-isopropylmalate. It functions in the pathway amino-acid biosynthesis; L-leucine biosynthesis; L-leucine from 3-methyl-2-oxobutanoate: step 2/4. Functionally, catalyzes the isomerization between 2-isopropylmalate and 3-isopropylmalate, via the formation of 2-isopropylmaleate. The sequence is that of 3-isopropylmalate dehydratase large subunit from Synechococcus sp. (strain WH7803).